A 288-amino-acid chain; its full sequence is 33 kDa chaperonin (288 aa).

Intrachain disulfides connect Cys233–Cys235 and Cys267–Cys270.

This sequence belongs to the HSP33 family. Post-translationally, under oxidizing conditions two disulfide bonds are formed involving the reactive cysteines. Under reducing conditions zinc is bound to the reactive cysteines and the protein is inactive.

It localises to the cytoplasm. Redox regulated molecular chaperone. Protects both thermally unfolding and oxidatively damaged proteins from irreversible aggregation. Plays an important role in the bacterial defense system toward oxidative stress. In Actinobacillus succinogenes (strain ATCC 55618 / DSM 22257 / CCUG 43843 / 130Z), this protein is 33 kDa chaperonin.